Here is a 259-residue protein sequence, read N- to C-terminus: Phosphoribosylaminoimidazole-succinocarboxamide synthase (259 aa).

It belongs to the SAICAR synthetase family.

It carries out the reaction 5-amino-1-(5-phospho-D-ribosyl)imidazole-4-carboxylate + L-aspartate + ATP = (2S)-2-[5-amino-1-(5-phospho-beta-D-ribosyl)imidazole-4-carboxamido]succinate + ADP + phosphate + 2 H(+). Its pathway is purine metabolism; IMP biosynthesis via de novo pathway; 5-amino-1-(5-phospho-D-ribosyl)imidazole-4-carboxamide from 5-amino-1-(5-phospho-D-ribosyl)imidazole-4-carboxylate: step 1/2. The protein is Phosphoribosylaminoimidazole-succinocarboxamide synthase of Zymomonas mobilis subsp. mobilis (strain ATCC 31821 / ZM4 / CP4).